The following is a 338-amino-acid chain: 5-dehydro-2-deoxygluconokinase (338 aa).

Belongs to the carbohydrate kinase PfkB family.

It carries out the reaction 5-dehydro-2-deoxy-D-gluconate + ATP = 6-phospho-5-dehydro-2-deoxy-D-gluconate + ADP + H(+). It functions in the pathway polyol metabolism; myo-inositol degradation into acetyl-CoA; acetyl-CoA from myo-inositol: step 5/7. Its function is as follows. Catalyzes the phosphorylation of 5-dehydro-2-deoxy-D-gluconate (2-deoxy-5-keto-D-gluconate or DKG) to 6-phospho-5-dehydro-2-deoxy-D-gluconate (DKGP). The polypeptide is 5-dehydro-2-deoxygluconokinase (Mesomycoplasma hyopneumoniae (strain 232) (Mycoplasma hyopneumoniae)).